Consider the following 409-residue polypeptide: Probable ferredoxin reductase CtmF (409 aa).

Ala15, Asp37, Lys50, Val83, Asp279, and Val298 together coordinate FAD.

The protein belongs to the FAD-dependent oxidoreductase family. It depends on FAD as a cofactor.

It participates in terpene metabolism; monoterpene degradation. Involved in the degradation of the cyclic monoterpene limonene. Probably part of an electron transfer system involved in the oxidation of limonene to perillyl alcohol. In Castellaniella defragrans (strain DSM 12143 / CCUG 39792 / 65Phen) (Alcaligenes defragrans), this protein is Probable ferredoxin reductase CtmF.